The primary structure comprises 658 residues: MRRAPERLSACHAMARKPQTPPDRETERFHEERAATTLRGADRPDIELGAGVIRETVQTLKPKPGVYRMLDARGDVLYVGKARALKNRVANYTQVERLPNRLRRMVSQTRSMTIVTTNSEAEALLLEAQLIKRFRPPYNVLLRDDKSFPFILLRGDHAFPRISKHRGARKAKGNYYGPFASAGSVNTTINALQKLFLLRSCNDGFMARRDRPCLLYQIRRCSAPCVGRISEADYGELVRQAKDFLGGKSGAVQREIEAQMHKAAEDLDFERAAMLRDRLRAATFIQGSQAINAEGVGNADVFAMATKGGQVAVQAFFIRGGQNWGHRAFFPSHTEGLSEEEVMTSFLAQFYEEVPPARLILVDRALPEADLLAEALCEAAGGKVEISVPQRGDRRRLMEQAQRNAVEALDRRMAESGTKAKVMRELAEFLELPEVPQRIEIYDNSHIQGTNALGAMVVAGPEGFVKGQYRKWNIKLAQTNDDFAMMREVMTRRFGRAQEEDPDRESGNWPDLVLIDGGKGQMSAVKEALGELGIEDVPLVAIAKGPHHGREGREVFHFPDGREKMLPVNSPVLFQLQVMRDEVHRFAIGAHRAKRSRAITASPLDEIPGIGPARKRALLLHFGTAGKVRAASLEDLQRAPGVSAAVAQTIYDFYHPSG.

The GIY-YIG domain occupies 62-140; the sequence is PKPGVYRMLD…IKRFRPPYNV (79 aa). The UVR domain occupies 250 to 285; it reads GAVQREIEAQMHKAAEDLDFERAAMLRDRLRAATFI.

This sequence belongs to the UvrC family. In terms of assembly, interacts with UvrB in an incision complex.

The protein localises to the cytoplasm. In terms of biological role, the UvrABC repair system catalyzes the recognition and processing of DNA lesions. UvrC both incises the 5' and 3' sides of the lesion. The N-terminal half is responsible for the 3' incision and the C-terminal half is responsible for the 5' incision. This chain is UvrABC system protein C, found in Novosphingobium aromaticivorans (strain ATCC 700278 / DSM 12444 / CCUG 56034 / CIP 105152 / NBRC 16084 / F199).